The chain runs to 687 residues: MSVIQLVFRLLCVLDLLLAVSASGLHGRNRTLSHEYCVLGAGPAGLQMGYFLSRSQRDYIILERNAGPGSFFNIYPRHRKLISINKIYTGRRNKEFNLRHDWNSLLSDRPDLLFQRISRKLYPSADDFPHYLSLFEKELGLKVKYGTDVGRIKASDFNGHQGYVLTDQNGVNYQCRVLLVSTGLWVPQEVDFRGSDLVEGYESIPTDPEEFKDQAVLILGKGNSAFETAQSILGRASRIHLYSPSPVRLAWQTHYVGDLRAVNNELLDTYQLKSLDGLVEGRLEDIAIVRRAKDRGKRRAAKKRNSTSTKRNEPLYLTLTELLDDQNDTNISNVTGQNLPGYHTDNFSLRQPYDRVIRCLGFRFNFSIFDGSARPPQSSGARGRLPGVTAWYEGRGTPNMFVLGIAAHSRDYRMSAGGFIHGFRYTVRAVHKILEQRYHNIAWPTTNIPISQLQSWILRRVNEASGTYQMFGVLGDIILLQGSHCEYLEEFPLQALPQLSALSGRSISDHGLLVLVMQYGLNHTDTLGPGRAESEWTKAWKSNFLHPVLYYYKTLPTDKDMRQRPVGWPLPRPEAVHHMVEDFLTEWDQPISHSQPLRRFLEHCLKTDLRAFYAESCFLLSLTSRNPPLFCRQGYLRKQGIMGNRHLWQHAREAGLMEDAALSEDASVPEYLNHAGAAVISTVNFDL.

Positions 1-22 (MSVIQLVFRLLCVLDLLLAVSA) are cleaved as a signal peptide. 2 N-linked (GlcNAc...) asparagine glycosylation sites follow: N29 and N305.

It belongs to the FOXRED2 family. FAD is required as a cofactor. N-glycosylated.

The protein localises to the endoplasmic reticulum lumen. Functionally, probable flavoprotein which may function in endoplasmic reticulum associated degradation (ERAD). May bind non-native proteins in the endoplasmic reticulum and target them to the ubiquitination machinery for subsequent degradation. This Danio rerio (Zebrafish) protein is FAD-dependent oxidoreductase domain-containing protein 2 (foxred2).